The chain runs to 644 residues: Chaperone protein DnaK (644 aa).

Position 199 is a phosphothreonine; by autocatalysis (Thr199). The span at 550–584 shows a compositional bias: basic and acidic residues; it reads ADKLDESEKQRAQDEIKRGREAMESGDLERMKASR. Disordered stretches follow at residues 550-586 and 599-644; these read ADKL…SRDS and YSQA…EDKK. Over residues 600–623 the composition is skewed to low complexity; the sequence is SQAGPEQGAPGAEAGAGASQGASG.

It belongs to the heat shock protein 70 family.

In terms of biological role, acts as a chaperone. The polypeptide is Chaperone protein DnaK (Leptospira biflexa serovar Patoc (strain Patoc 1 / Ames)).